A 777-amino-acid polypeptide reads, in one-letter code: Zinc finger protein 786 (777 aa).

One can recognise a KRAB domain in the interval 9 to 80 (LTFEDVAIYF…WGEKKKPDKE (72 aa)). A C2H2-type 1; degenerate zinc finger spans residues 194–216 (NSCPVCRENSWEKNHLVKQQKGH). The C2H2-type 2 zinc finger occupies 240–262 (ISCLGCGKSFRLKQYLVRHLDIH). The segment at 268 to 291 (PQCPKCKMCFHHERTLFSHHLKNS) adopts a C2H2-type 3; degenerate zinc-finger fold. The segment at 420–442 (VFCRKCGQGFTKHCGLTEHTRIL) adopts a C2H2-type 4; degenerate zinc-finger fold. C2H2-type zinc fingers lie at residues 448 to 470 (FWCA…QRLH), 476 to 498 (FQCT…QLQH), 504 to 526 (FSCS…LRVH), 532 to 554 (FQCP…QRIH), 560 to 582 (FSCG…FRVH), 588 to 610 (FQCP…QRLH), 616 to 638 (FQCP…QLLH), 644 to 665 (FSCQ…MRTH), 671 to 693 (FQCP…QGLH), 699 to 721 (FHCP…QRIH), and 727 to 749 (FACG…IRVH).

Belongs to the krueppel C2H2-type zinc-finger protein family.

Its subcellular location is the nucleus. Functionally, may be involved in transcriptional regulation. This is Zinc finger protein 786 (Znf786) from Mus musculus (Mouse).